Reading from the N-terminus, the 491-residue chain is Monocarboxylate transport permease protein (491 aa).

Helical transmembrane passes span 7 to 27, 55 to 75, 83 to 103, 130 to 150, 157 to 177, 187 to 207, 246 to 266, 277 to 297, 322 to 342, 374 to 396, 400 to 422, 427 to 447, and 465 to 485; these read GTAL…GFVA, WFLV…PALV, FFAL…MPVL, LAVA…QLVG, ALGL…ALYT, LIAF…VALI, LALG…GIFA, AIML…GYMG, WFSG…AAVM, ITSL…QFAL, LLGG…TNWF, LLAG…DAGW, and GLLA…LLPA.

The protein belongs to the sodium:solute symporter (SSF) (TC 2.A.21) family.

Its subcellular location is the cell membrane. Its activity is regulated as follows. Inhibited by CCCP, but is apparently not affected by the concentration of sodium. Functionally, low-affinity transporter of alanine and high-affinity transporter of lactate and pyruvate. Can also transport other monocarboxylates such as propionate, butyrate, alpha-hydroxybutyrate or acetate. May be proton coupled. Required for optimal growth on alanine or pyruvate and ammonia. This is Monocarboxylate transport permease protein from Rhizobium johnstonii (strain DSM 114642 / LMG 32736 / 3841) (Rhizobium leguminosarum bv. viciae).